We begin with the raw amino-acid sequence, 460 residues long: Bifunctional beta-D-glucosidase/beta-D-fucosidase (460 aa).

The active-site Proton donor is Glu168. Residue Glu362 is the Nucleophile of the active site.

Belongs to the glycosyl hydrolase 1 family. In terms of assembly, monomer.

Its subcellular location is the secreted. The enzyme catalyses Hydrolysis of terminal, non-reducing beta-D-glucosyl residues with release of beta-D-glucose.. The catalysed reaction is Hydrolysis of terminal non-reducing beta-D-fucose residues in beta-D-fucosides.. Its activity is regulated as follows. Inhibited by Cu(2+), Ag(+) and Hg(+), but not by other cations such as Mg(2+), Ca(2+), Mn(2+) and Co(2+). Inhibited by 1-amino-1-deoxy-D-glucose and p-chloromercuribenzoic acid, but not by EDTA or dithiothreitol. Inhibited by the disaccharides sucrose, lactose and cellobiose. The monosaccharides D-fructose, D-mannose, D-xylose and D-glucose increase the beta-D-fucosidase activity, but not the beta-D-glucosidase activity. D-glucose inhibits the beta-D-glucosidase activity, but promotes the beta-D-fucosidase activity. D-fucose inhibits the beta-D-glucosidase activity and does not significantly affect the beta-D-fucosidase activity. Its function is as follows. Bifunctional beta-D-glucosidase/beta-D-fucosidase. Activity towards pNP-beta-D-fucoside is about 80-85% of the activity towards pNP-beta-D-glucoside. Also has slight activity (less than 10%) towards pNP-beta-D-galactoside, and very low activity (less than 1%) towards pNP-beta-D-xyloside. Hydrolyzes laminaribiose, sophorose, cellobiose and gentobiose. Not active against maltose, pNP-alpha-D-glucoside or pNP-beta-L-fucoside. The chain is Bifunctional beta-D-glucosidase/beta-D-fucosidase from Bifidobacterium breve.